The sequence spans 333 residues: DNA-directed RNA polymerase subunit alpha (333 aa).

The interval 1–233 is alpha N-terminal domain (alpha-NTD); the sequence is MVREKVRVST…DLFIPFLHAE (233 aa). The tract at residues 266-333 is alpha C-terminal domain (alpha-CTD); the sequence is KKEIAFKSIF…DILEIEKHFP (68 aa).

This sequence belongs to the RNA polymerase alpha chain family. As to quaternary structure, in plastids the minimal PEP RNA polymerase catalytic core is composed of four subunits: alpha, beta, beta', and beta''. When a (nuclear-encoded) sigma factor is associated with the core the holoenzyme is formed, which can initiate transcription.

The protein localises to the plastid. Its subcellular location is the chloroplast. It catalyses the reaction RNA(n) + a ribonucleoside 5'-triphosphate = RNA(n+1) + diphosphate. In terms of biological role, DNA-dependent RNA polymerase catalyzes the transcription of DNA into RNA using the four ribonucleoside triphosphates as substrates. This Lotus japonicus (Lotus corniculatus var. japonicus) protein is DNA-directed RNA polymerase subunit alpha.